Here is a 91-residue protein sequence, read N- to C-terminus: Probable Fe(2+)-trafficking protein (91 aa).

This sequence belongs to the Fe(2+)-trafficking protein family.

Its function is as follows. Could be a mediator in iron transactions between iron acquisition and iron-requiring processes, such as synthesis and/or repair of Fe-S clusters in biosynthetic enzymes. The chain is Probable Fe(2+)-trafficking protein from Burkholderia multivorans (strain ATCC 17616 / 249).